Consider the following 80-residue polypeptide: RNA-binding protein Hfq (80 aa).

A Sm domain is found at 10–69; it reads DPFLNALRKEHVPVSIYLVNGIKLQGNIESFDQYVVLLRNTVTQMVYKHAISTVVPARPV.

Belongs to the Hfq family. In terms of assembly, homohexamer.

In terms of biological role, RNA chaperone that binds small regulatory RNA (sRNAs) and mRNAs to facilitate mRNA translational regulation in response to envelope stress, environmental stress and changes in metabolite concentrations. Also binds with high specificity to tRNAs. This chain is RNA-binding protein Hfq, found in Burkholderia ambifaria (strain ATCC BAA-244 / DSM 16087 / CCUG 44356 / LMG 19182 / AMMD) (Burkholderia cepacia (strain AMMD)).